The following is a 152-amino-acid chain: D-aminoacyl-tRNA deacylase (152 aa).

Residues 142 to 143 carry the Gly-cisPro motif, important for rejection of L-amino acids motif; that stretch reads GP.

Belongs to the DTD family. Homodimer.

It localises to the cytoplasm. The enzyme catalyses glycyl-tRNA(Ala) + H2O = tRNA(Ala) + glycine + H(+). The catalysed reaction is a D-aminoacyl-tRNA + H2O = a tRNA + a D-alpha-amino acid + H(+). An aminoacyl-tRNA editing enzyme that deacylates mischarged D-aminoacyl-tRNAs. Also deacylates mischarged glycyl-tRNA(Ala), protecting cells against glycine mischarging by AlaRS. Acts via tRNA-based rather than protein-based catalysis; rejects L-amino acids rather than detecting D-amino acids in the active site. By recycling D-aminoacyl-tRNA to D-amino acids and free tRNA molecules, this enzyme counteracts the toxicity associated with the formation of D-aminoacyl-tRNA entities in vivo and helps enforce protein L-homochirality. The protein is D-aminoacyl-tRNA deacylase of Paraburkholderia phytofirmans (strain DSM 17436 / LMG 22146 / PsJN) (Burkholderia phytofirmans).